Here is a 420-residue protein sequence, read N- to C-terminus: RING finger protein 39 (420 aa).

The RING-type zinc-finger motif lies at 88 to 135; the sequence is CPLCGGSFEDPVLLACEHSFCRACLARRWGTPPATGTEASPTACPCCG. The region spanning 210–420 is the B30.2/SPRY domain; sequence DDLPEDYPVV…APLRIVPAES (211 aa).

As to expression, expressed in testis.

The protein resides in the cytoplasm. The catalysed reaction is S-ubiquitinyl-[E2 ubiquitin-conjugating enzyme]-L-cysteine + [acceptor protein]-L-lysine = [E2 ubiquitin-conjugating enzyme]-L-cysteine + N(6)-ubiquitinyl-[acceptor protein]-L-lysine.. Its pathway is protein modification; protein ubiquitination. Functionally, plays an inhibitory role in anti-RNA viral innate immunity by targeting the adapter DDX3X and promoting its 'Lys-48'-linked polyubiquitination. Alternatively, enhances the cGAS-STING pathway activation by promoting 'Lys-63'-linked ubiquitination of STING1, facilitating the STING1-TBK1 complex formation and STING1 activation. In terms of biological role, (Microbial infection) Plays a positive role in human immunodeficiency virus (HIV-1) replication. The protein is RING finger protein 39 (RNF39) of Homo sapiens (Human).